A 464-amino-acid chain; its full sequence is Galactose-proton symporter (464 aa).

The Cytoplasmic segment spans residues 1–15 (MPDAKKQGRSNKAMT). Residues 16 to 36 (FFVCFLAALAGLLFGLDIGVI) traverse the membrane as a helical segment. Topologically, residues 37-56 (AGALPFIADEFQITSHTQEW) are periplasmic. A helical membrane pass occupies residues 57 to 77 (VVSSMMFGAAVGAVGSGWLSF). The Cytoplasmic portion of the chain corresponds to 78–84 (KLGRKKS). A helical membrane pass occupies residues 85-105 (LMIGAILFVAGSLFSAAAPNV). At 106 to 112 (EVLILSR) the chain is on the periplasmic side. The chain crosses the membrane as a helical span at residues 113–133 (VLLGLAVGVASYTAPLYLSEI). Residues 134–139 (APEKIR) are Cytoplasmic-facing. Residues 140–160 (GSMISMYQLMITIGILGAYLS) traverse the membrane as a helical segment. Over 161 to 171 (DTAFSYTGAWR) the chain is Periplasmic. Residues 172-192 (WMLGVIIIPAILLLIGVFFLP) form a helical membrane-spanning segment. The Cytoplasmic portion of the chain corresponds to 193-250 (DSPRWFAAKRRFVDAERVLLRLRDTSAEAKRELDEIRESLQVKQSGWALFKENSNFRR). Residues 251-271 (AVFLGVLLQVMQQFTGMNVIM) form a helical membrane-spanning segment. Residues 272-290 (YYAPKIFELAGYTNTTEQM) are Periplasmic-facing. Residues 291–311 (WGTVIVGLTNVLATFIAIGLV) traverse the membrane as a helical segment. Over 312–321 (DRWGRKPTLT) the chain is Cytoplasmic. The helical transmembrane segment at 322-342 (LGFLVMAAGMGVLGTMMHIGI) threads the bilayer. The Periplasmic segment spans residues 343-351 (HSPSAQYFA). Residues 352–372 (IAMLLMFIVGFAMSAGPLIWV) traverse the membrane as a helical segment. At 373 to 394 (LCSEIQPLKGRDFGITCSTATN) the chain is on the cytoplasmic side. A helical membrane pass occupies residues 395 to 415 (WIANMIVGATFLTMLNTLGNA). N416 is a topological domain (periplasmic). A helical transmembrane segment spans residues 417–437 (TFWVYAALNVLFILLTLWLVP). Topologically, residues 438–464 (ETKHVSLEHIERNLMKGRKLREIGAHD) are cytoplasmic.

Belongs to the major facilitator superfamily. Sugar transporter (TC 2.A.1.1) family.

The protein localises to the cell inner membrane. Uptake of galactose across the boundary membrane with the concomitant transport of protons into the cell (symport system). The polypeptide is Galactose-proton symporter (galP) (Escherichia coli O6:H1 (strain CFT073 / ATCC 700928 / UPEC)).